The primary structure comprises 237 residues: Demethylmenaquinone methyltransferase (237 aa).

Residues Thr-58, Asp-79, and 106–107 contribute to the S-adenosyl-L-methionine site; that span reads NA.

The protein belongs to the class I-like SAM-binding methyltransferase superfamily. MenG/UbiE family.

The catalysed reaction is a 2-demethylmenaquinol + S-adenosyl-L-methionine = a menaquinol + S-adenosyl-L-homocysteine + H(+). Its pathway is quinol/quinone metabolism; menaquinone biosynthesis; menaquinol from 1,4-dihydroxy-2-naphthoate: step 2/2. Methyltransferase required for the conversion of demethylmenaquinol (DMKH2) to menaquinol (MKH2). The protein is Demethylmenaquinone methyltransferase of Bacillus cereus (strain B4264).